A 446-amino-acid polypeptide reads, in one-letter code: Putative F-box protein At1g32660 (446 aa).

Basic and acidic residues-rich tracts occupy residues 1-12 (MKRKDDDQEDRS) and 43-57 (NKLEEDEKEDTNPSK). Residues 1–57 (MKRKDDDQEDRSCSSASKLDPIPLDLKMATVPTKSHMKKSHQNKLEEDEKEDTNPSK) form a disordered region. In terms of domain architecture, F-box spans 57-107 (KLELDSLPLDLKMAILTRIPAKSLMKLRCVSKMWSSIIRSRGFIDSYYAIS).

This chain is Putative F-box protein At1g32660, found in Arabidopsis thaliana (Mouse-ear cress).